A 294-amino-acid chain; its full sequence is Cytidine deaminase (294 aa).

2 consecutive CMP/dCMP-type deaminase domains span residues 48 to 168 (DEDA…FGPK) and 186 to 294 (LTGD…VLLA). 89 to 91 (NME) contacts substrate. Residue His102 coordinates Zn(2+). The active-site Proton donor is Glu104. Zn(2+) contacts are provided by Cys129 and Cys132.

The protein belongs to the cytidine and deoxycytidylate deaminase family. As to quaternary structure, homodimer. Requires Zn(2+) as cofactor.

The catalysed reaction is cytidine + H2O + H(+) = uridine + NH4(+). It catalyses the reaction 2'-deoxycytidine + H2O + H(+) = 2'-deoxyuridine + NH4(+). In terms of biological role, this enzyme scavenges exogenous and endogenous cytidine and 2'-deoxycytidine for UMP synthesis. This Escherichia coli O17:K52:H18 (strain UMN026 / ExPEC) protein is Cytidine deaminase.